Consider the following 413-residue polypeptide: Aspartate aminotransferase, cytoplasmic (413 aa).

Glycine 39, tryptophan 141, and asparagine 195 together coordinate L-aspartate. Lysine 259 carries the N6-(pyridoxal phosphate)lysine modification. Residue arginine 387 participates in L-aspartate binding.

It belongs to the class-I pyridoxal-phosphate-dependent aminotransferase family. In terms of assembly, homodimer. The cofactor is pyridoxal 5'-phosphate.

It is found in the cytoplasm. The enzyme catalyses L-aspartate + 2-oxoglutarate = oxaloacetate + L-glutamate. It catalyses the reaction L-cysteine + 2-oxoglutarate = 2-oxo-3-sulfanylpropanoate + L-glutamate. It carries out the reaction (2S)-2-aminobutanoate + 2-oxoglutarate = 2-oxobutanoate + L-glutamate. The catalysed reaction is 3-sulfino-L-alanine + 2-oxoglutarate = 3-sulfinopyruvate + L-glutamate. In terms of biological role, biosynthesis of L-glutamate from L-aspartate or L-cysteine. Important regulator of levels of glutamate, the major excitatory neurotransmitter of the vertebrate central nervous system. Acts as a scavenger of glutamate in brain neuroprotection. The aspartate aminotransferase activity is involved in hepatic glucose synthesis during development and in adipocyte glyceroneogenesis. Using L-cysteine as substrate, regulates levels of mercaptopyruvate, an important source of hydrogen sulfide. Mercaptopyruvate is converted into H(2)S via the action of 3-mercaptopyruvate sulfurtransferase (3MST). Hydrogen sulfide is an important synaptic modulator and neuroprotectant in the brain. The protein is Aspartate aminotransferase, cytoplasmic of Bos taurus (Bovine).